Reading from the N-terminus, the 189-residue chain is UPF0301 protein PSEEN5058 (189 aa).

It belongs to the UPF0301 (AlgH) family.

The protein is UPF0301 protein PSEEN5058 of Pseudomonas entomophila (strain L48).